The sequence spans 491 residues: Pre-glycoprotein polyprotein GP complex (491 aa).

Gly-2 is lipidated: N-myristoyl glycine; by host. The Extracellular portion of the chain corresponds to 2 to 17 (GQIVTFFQEVPHVIEE). The chain crosses the membrane as a helical span at residues 18–33 (VMNIVLIALSVLAVLK). Residues 34–58 (GLYNFATCGLVGLVTFLLLCGRSCT) lie on the Cytoplasmic side of the membrane. Cys-57 contributes to the Zn(2+) binding site. Topologically, residues 59–432 (TSLYKGVYEL…QGKTPLGLVD (374 aa)) are extracellular. N-linked (GlcNAc...) asparagine; by host glycans are attached at residues Asn-79, Asn-89, Asn-99, Asn-109, Asn-119, and Asn-167. Disulfide bonds link Cys-86/Cys-231, Cys-118/Cys-155, Cys-180/Cys-212, Cys-279/Cys-292, Cys-301/Cys-310, and Cys-364/Cys-385. A glycan (N-linked (GlcNAc...) asparagine; by host) is linked at Asn-224. N-linked (GlcNAc...) asparagine; by host glycans are attached at residues Asn-365, Asn-373, Asn-390, and Asn-395. Residues 433-453 (LFVFSTSFYLISIFLHLVKIP) form a helical membrane-spanning segment. Over 454–491 (THRHIVGKSCPKPHRLNHMGICSCGLYKQPGVPVKWKR) the chain is Cytoplasmic. Residues His-455, His-457, Cys-463, His-467, Cys-475, and Cys-477 each contribute to the Zn(2+) site.

Belongs to the arenaviridae GPC protein family. As to quaternary structure, interacts with glycoprotein G2. Part of the GP complex (GP-C) together with glycoprotein G1 and glycoprotein G2. The GP-complex interacts with protein Z, which interacts with ribonucleocapsid; these interactions may induce virion budding. In terms of assembly, homotrimer; disulfide-linked. In pre-fusion state, G1 homotrimers bind G2 homotrimers via ionic interactions. Part of the GP complex (GP-C) together with glycoprotein G2 and the stable signal peptide. Interacts with the primary host receptor DAG1 on the cell surface; this interaction occurs at pH 8.0 but not at pH 6.0 and below. Upon virus internalization and at endosomal pH, interacts with the host lysosomal protein LAMP1; this interaction mediates G1 dissociation from GP-C and membrane fusion. The GP-complex interacts with protein Z, which interacts with ribonucleocapsid; these interactions may induce virion budding. Homotrimer. Interacts with the stable signal peptide. In pre-fusion state, G2 homotrimers bind G1 homotrimers via ionic interactions. Part of the GP complex (GP-C) together with glycoprotein G1 and the stable signal peptide. Acidification in the endosome triggers rearrangements, which ultimately leads to a 6 helix bundle formed by the two heptad repeat domains (HR1 and HR2) in post-fusion state. The GP-complex interacts with protein Z, which interacts with ribonucleocapsid; these interactions may induce virion budding. Post-translationally, specific enzymatic cleavages in vivo yield mature proteins. GP-C polyprotein is cleaved in the endoplasmic reticulum by the host protease MBTPS1. Only cleaved glycoprotein is incorporated into virions. In terms of processing, the SSP remains stably associated with the GP complex following cleavage by signal peptidase and plays crucial roles in the trafficking of GP through the secretory pathway. Myristoylation is necessary for GP2-mediated fusion activity.

The protein localises to the virion membrane. It localises to the host endoplasmic reticulum membrane. The protein resides in the host Golgi apparatus membrane. It is found in the host cell membrane. Functions as a cleaved signal peptide that is retained as the third component of the GP complex (GP-C). Helps to stabilize the spike complex in its native conformation. The SSP is required for efficient glycoprotein expression, post-translational maturation cleavage of G1 and G2, glycoprotein transport to the cell surface plasma membrane, formation of infectious virus particles, and acid pH-dependent glycoprotein-mediated cell fusion. In terms of biological role, forms the virion spikes together with glycoprotein G2. The glycoprotein spike trimers are connected to the underlying matrix. Interacts with the host receptor. Mediates virus attachment to the host primary receptor alpha-dystroglycan DAG1 (alpha-DG) at the cell surface. This attachment induces virion internalization apparently through macropinocytosis. Following endocytosis, there is a pH-dependent switch from binding DAG1 to the host lysosomal receptor LAMP1. This latter binding triggers the dissociation of GP1, exposing the fusion subunit, GP2, such that fusion can occur. Down-modulates host DAG1. Functionally, forms the virion spikes together with glycoprotein G1. The glycoprotein spike trimers are connected to the underlying matrix. Class I viral fusion protein that directs fusion of viral and host endosomal membranes, leading to delivery of the nucleocapsid into the cytoplasm. Membrane fusion is mediated by irreversible conformational changes induced by acidification. This chain is Pre-glycoprotein polyprotein GP complex, found in Homo sapiens (Human).